The following is a 153-amino-acid chain: UPF0178 protein CC_1215 (153 aa).

It belongs to the UPF0178 family.

This Caulobacter vibrioides (strain ATCC 19089 / CIP 103742 / CB 15) (Caulobacter crescentus) protein is UPF0178 protein CC_1215.